The primary structure comprises 290 residues: Agmatinase (290 aa).

Positions 112, 135, 137, 139, 216, and 218 each coordinate Mn(2+).

Belongs to the arginase family. Agmatinase subfamily. Requires Mn(2+) as cofactor.

The catalysed reaction is agmatine + H2O = urea + putrescine. It functions in the pathway amine and polyamine biosynthesis; putrescine biosynthesis via agmatine pathway; putrescine from agmatine: step 1/1. In terms of biological role, catalyzes the formation of putrescine from agmatine. This Bacillus subtilis (strain 168) protein is Agmatinase (speB).